The primary structure comprises 331 residues: 6-phosphogluconolactonase (331 aa).

Belongs to the cycloisomerase 2 family.

The enzyme catalyses 6-phospho-D-glucono-1,5-lactone + H2O = 6-phospho-D-gluconate + H(+). It functions in the pathway carbohydrate degradation; pentose phosphate pathway; D-ribulose 5-phosphate from D-glucose 6-phosphate (oxidative stage): step 2/3. In terms of biological role, catalyzes the hydrolysis of 6-phosphogluconolactone to 6-phosphogluconate. The protein is 6-phosphogluconolactonase of Salmonella choleraesuis (strain SC-B67).